A 151-amino-acid polypeptide reads, in one-letter code: Large ribosomal subunit protein bL9 (151 aa).

The protein belongs to the bacterial ribosomal protein bL9 family.

Binds to the 23S rRNA. The protein is Large ribosomal subunit protein bL9 of Prochlorococcus marinus (strain MIT 9301).